The primary structure comprises 510 residues: Mitochondrial metal transporter 1 (510 aa).

Residues 120-141 (ADKPSSLNLHSHTHSHGHTHSH) form a disordered region. Residues 130-141 (SHTHSHGHTHSH) show a composition bias toward basic residues. Transmembrane regions (helical) follow at residues 165-185 (WVGL…GIVF), 194-214 (AIHA…VGLA), 241-261 (LAMA…GPVI), 286-306 (VTDI…EWIF), 333-353 (LTSL…IQSL), and 356-376 (IGGL…MCIA).

Belongs to the cation diffusion facilitator (CDF) transporter (TC 2.A.4) family. SLC30A subfamily.

The protein localises to the mitochondrion membrane. Its function is as follows. Mitochondrial metal transporter involved in mitochondrial iron accumulation. This chain is Mitochondrial metal transporter 1 (MMT1), found in Saccharomyces cerevisiae (strain ATCC 204508 / S288c) (Baker's yeast).